A 337-amino-acid chain; its full sequence is 6-phosphogluconolactonase (337 aa).

This sequence belongs to the cycloisomerase 2 family.

It carries out the reaction 6-phospho-D-glucono-1,5-lactone + H2O = 6-phospho-D-gluconate + H(+). It functions in the pathway carbohydrate degradation; pentose phosphate pathway; D-ribulose 5-phosphate from D-glucose 6-phosphate (oxidative stage): step 2/3. In terms of biological role, catalyzes the hydrolysis of 6-phosphogluconolactone to 6-phosphogluconate. The protein is 6-phosphogluconolactonase of Blochmanniella pennsylvanica (strain BPEN).